We begin with the raw amino-acid sequence, 201 residues long: Small ribosomal subunit protein uS4 (201 aa).

Residues 21–43 (GTGKELNRRPYAPGDHGQGRRQK) are disordered. Residues 93-153 (RRLDNMVYRL…EKSKDMAIIK (61 aa)) form the S4 RNA-binding domain.

The protein belongs to the universal ribosomal protein uS4 family. As to quaternary structure, part of the 30S ribosomal subunit. Contacts protein S5. The interaction surface between S4 and S5 is involved in control of translational fidelity.

Functionally, one of the primary rRNA binding proteins, it binds directly to 16S rRNA where it nucleates assembly of the body of the 30S subunit. Its function is as follows. With S5 and S12 plays an important role in translational accuracy. The polypeptide is Small ribosomal subunit protein uS4 (Levilactobacillus brevis (strain ATCC 367 / BCRC 12310 / CIP 105137 / JCM 1170 / LMG 11437 / NCIMB 947 / NCTC 947) (Lactobacillus brevis)).